The sequence spans 118 residues: V-type proton ATPase subunit G 1 (118 aa).

Ala2 carries the N-acetylalanine modification.

This sequence belongs to the V-ATPase G subunit family. V-ATPase is a heteromultimeric enzyme made up of two complexes: the ATP-hydrolytic V1 complex and the proton translocation V0 complex. The V1 complex consists of three catalytic AB heterodimers that form a heterohexamer, three peripheral stalks each consisting of EG heterodimers, one central rotor including subunits D and F, and the regulatory subunits C and H. The proton translocation complex V0 consists of the proton transport subunit a, a ring of proteolipid subunits c9c'', rotary subunit d, subunits e and f, and the accessory subunits ATP6AP1/Ac45 and ATP6AP2/PRR. As to expression, kidney; localizes to early distal nephron, encompassing thick ascending limbs and distal convoluted tubules (at protein level). Ubiquitous.

It localises to the apical cell membrane. In terms of biological role, subunit of the V1 complex of vacuolar(H+)-ATPase (V-ATPase), a multisubunit enzyme composed of a peripheral complex (V1) that hydrolyzes ATP and a membrane integral complex (V0) that translocates protons. V-ATPase is responsible for acidifying and maintaining the pH of intracellular compartments and in some cell types, is targeted to the plasma membrane, where it is responsible for acidifying the extracellular environment. In aerobic conditions, involved in intracellular iron homeostasis, thus triggering the activity of Fe(2+) prolyl hydroxylase (PHD) enzymes, and leading to HIF1A hydroxylation and subsequent proteasomal degradation. The protein is V-type proton ATPase subunit G 1 (Atp6v1g1) of Mus musculus (Mouse).